Here is a 294-residue protein sequence, read N- to C-terminus: Undecaprenyl-diphosphatase (294 aa).

Helical transmembrane passes span 39 to 59 (PGAA…ILYF), 93 to 113 (TQMG…GLLF), 123 to 143 (NLWI…VVDA), 197 to 217 (VSFL…AVSA), 234 to 254 (ATIA…IGFL), and 265 to 285 (FAIY…CGVL).

The protein belongs to the UppP family.

It is found in the cell membrane. The catalysed reaction is di-trans,octa-cis-undecaprenyl diphosphate + H2O = di-trans,octa-cis-undecaprenyl phosphate + phosphate + H(+). Catalyzes the dephosphorylation of undecaprenyl diphosphate (UPP). Confers resistance to bacitracin. The chain is Undecaprenyl-diphosphatase from Bifidobacterium adolescentis (strain ATCC 15703 / DSM 20083 / NCTC 11814 / E194a).